A 423-amino-acid polypeptide reads, in one-letter code: MDQPVLYNQPAFPNFSYSPGLGQEGGNYQYLGNYNAPSYPQPFFHVPPAIKSEYGAQDEVTGGSCHAAPFDWHLYPHFQFSNQVGALSSGDPSPEGRNEEDHGSISEERSSGTPSPNSPMVPSYAQYWHHAPWQGNPTGQALGLPSRAHPDGGEKPQQSDCSPTASLESGASNTEDEEVSSALSSRAERGLCSPSPNNASFGSGNEEDGTTLEEMEEFAKELKQKRVALGYTQGDIGHALGILYGKMFSQTTICRFESLQLTFKNMCKLKPLLEQWLGEAENNDNLQEMIHKAQLEEQNRKRKMRTCFDSVLKGRLEGHFMCNQKPGARELAEIAKELGLEKDVVRVWFCNRRQKEKSKSRMSKAHEFVGGASPVPSPAEHISQDYGLAPLHPNRPPFYPPPFPRNDLFPHMVPGMSMGVLTG.

The disordered stretch occupies residues 85 to 211 (GALSSGDPSP…GSGNEEDGTT (127 aa)). Over residues 94–110 (PEGRNEEDHGSISEERS) the composition is skewed to basic and acidic residues. Polar residues-rich tracts occupy residues 111-120 (SGTPSPNSPM), 156-173 (PQQS…GASN), and 194-203 (PSPNNASFGS). The 75-residue stretch at 207–281 (EDGTTLEEME…LLEQWLGEAE (75 aa)) folds into the POU-specific domain. Residues 301–360 (KRKMRTCFDSVLKGRLEGHFMCNQKPGARELAEIAKELGLEKDVVRVWFCNRRQKEKSKS) constitute a DNA-binding region (homeobox).

It belongs to the POU transcription factor family. Class-5 subfamily. In terms of assembly, interacts with the transcription factors tcf7l1/tcf3 and vegt.

It localises to the nucleus. Transcription factor that binds to the octamer motif (5'-ATTTGCAT-3'). Antagonizes the activity of nodal/activin signaling during gastrulation to suppress mesendoderm formation. Acts maternally to inhibit vegt and beta-catenin-activated gene transcription, probably by forming a transcriptional repression complex on the promoters of target genes. Binds to an octamer motif in interspersed RNA. This chain is POU domain, class 5, transcription factor 1.3 (pou5f1.3), found in Xenopus tropicalis (Western clawed frog).